We begin with the raw amino-acid sequence, 495 residues long: uncharacterized protein (495 aa).

Helical transmembrane passes span Ile43 to Ile63, Thr75 to Phe95, Pro106 to Val126, Leu128 to Ile148, Ile168 to Ala188, Trp196 to Leu216, Pro284 to Phe304, Gly323 to Leu343, Pro366 to Val386, Val390 to Phe410, Ala426 to Phe446, and Ser461 to Gly481.

Belongs to the major facilitator superfamily. CAR1 family.

Its subcellular location is the membrane. This is an uncharacterized protein from Schizosaccharomyces pombe (strain 972 / ATCC 24843) (Fission yeast).